Reading from the N-terminus, the 259-residue chain is NAD kinase (259 aa).

D49 serves as the catalytic Proton acceptor. Residues 49–50 (DG), R54, 118–119 (NE), D148, A156, 159–164 (TAYNYS), and A183 each bind NAD(+).

It belongs to the NAD kinase family. A divalent metal cation serves as cofactor.

The protein resides in the cytoplasm. It catalyses the reaction NAD(+) + ATP = ADP + NADP(+) + H(+). Functionally, involved in the regulation of the intracellular balance of NAD and NADP, and is a key enzyme in the biosynthesis of NADP. Catalyzes specifically the phosphorylation on 2'-hydroxyl of the adenosine moiety of NAD to yield NADP. In Xylella fastidiosa (strain 9a5c), this protein is NAD kinase.